The following is a 133-amino-acid chain: Ribonuclease VapC1 (133 aa).

2 residues coordinate Mg(2+): Asp-7 and Asp-98.

This sequence belongs to the PINc/VapC protein family. The cofactor is Mg(2+).

Its function is as follows. Toxic component of a type II toxin-antitoxin (TA) system. The cognate antitoxin is VapB1. The chain is Ribonuclease VapC1 from Mycobacterium tuberculosis (strain CDC 1551 / Oshkosh).